The primary structure comprises 380 residues: MPKVPETLAPRRTSRQIRVGKVLVGGDAPVSVQSMTTTPTTNINATLQQIAELTACGCDIVRVAVPNRDDAEVLPIIAKKSQIPVIADIHFQPNYVYAAIDAGCAAVRVNPGNIRKFDDQVGEIARRAKAADVSLRIGVNAGSLDRRLLEKYGKPTAEALVESAVWEASLFEEHDFHDFKISVKHNDPIVMVKAYRMLAERGDWPLHLGVTEAGPAFQGTIKSATAFGILLGEGIGDTIRVSLSAPPAEEVKVGLQILQSLNLRERKLEIVSCPSCGRAQVDVYKLAEDVTSGFEGMSVPLRVAVMGCVVNGPGEAREADLGVASGNGKGQIFVKGEVIKTVPESEIVATLIAEATRIAEDMADAGAPSPSGKPTVTVGR.

[4Fe-4S] cluster-binding residues include C273, C276, C308, and E315.

It belongs to the IspG family. [4Fe-4S] cluster serves as cofactor.

The catalysed reaction is (2E)-4-hydroxy-3-methylbut-2-enyl diphosphate + oxidized [flavodoxin] + H2O + 2 H(+) = 2-C-methyl-D-erythritol 2,4-cyclic diphosphate + reduced [flavodoxin]. It participates in isoprenoid biosynthesis; isopentenyl diphosphate biosynthesis via DXP pathway; isopentenyl diphosphate from 1-deoxy-D-xylulose 5-phosphate: step 5/6. Converts 2C-methyl-D-erythritol 2,4-cyclodiphosphate (ME-2,4cPP) into 1-hydroxy-2-methyl-2-(E)-butenyl 4-diphosphate. The chain is 4-hydroxy-3-methylbut-2-en-1-yl diphosphate synthase (flavodoxin) from Leifsonia xyli subsp. xyli (strain CTCB07).